The chain runs to 567 residues: Vacuolar fusion protein MON1 homolog (567 aa).

Disordered stretches follow at residues 1 to 52 (MDMD…DDEG) and 65 to 129 (TSAS…DDTS). Positions 7-19 (TNNPSPPGPPDSP) are enriched in pro residues. Acidic residues predominate over residues 43–52 (DDYDDDDDEG).

Belongs to the MON1/SAND family. As to quaternary structure, interacts with CCZ1A, CCZ1B and RABF2B.

It localises to the endosome. The protein localises to the prevacuolar compartment. Functionally, plays an important role in membrane trafficking through the secretory apparatus. In complex with CCZ1, acts as a guanine exchange factor (GEF) for Rab7 protein family. Promotes the exchange of GDP to GTP, converting it from an inactive GDP-bound form into an active GTP-bound form. The active form is involved in protein trafficking from prevacuolar compartments (PVCs) to vacuoles. May serve as a linker between Rab5 and Rab7 protein families in PVCs and mediate PVC maturation. This Oryza sativa subsp. japonica (Rice) protein is Vacuolar fusion protein MON1 homolog.